The sequence spans 137 residues: Large ribosomal subunit protein uL16 (137 aa).

This sequence belongs to the universal ribosomal protein uL16 family. As to quaternary structure, part of the 50S ribosomal subunit.

In terms of biological role, binds 23S rRNA and is also seen to make contacts with the A and possibly P site tRNAs. The chain is Large ribosomal subunit protein uL16 from Streptococcus mutans serotype c (strain ATCC 700610 / UA159).